We begin with the raw amino-acid sequence, 428 residues long: Adenylosuccinate synthetase (428 aa).

GTP-binding positions include 12–18 (GDEGKGK) and 40–42 (GHT). Residue D13 is the Proton acceptor of the active site. Mg(2+)-binding residues include D13 and G40. IMP-binding positions include 13–16 (DEGK), 38–41 (NAGH), T128, R142, Q223, T238, and R302. Residue H41 is the Proton donor of the active site. 298 to 304 (TTTGRPR) contacts substrate. GTP is bound by residues R304, 330-332 (SID), and 412-414 (SVG).

The protein belongs to the adenylosuccinate synthetase family. As to quaternary structure, homodimer. Requires Mg(2+) as cofactor.

It localises to the cytoplasm. The catalysed reaction is IMP + L-aspartate + GTP = N(6)-(1,2-dicarboxyethyl)-AMP + GDP + phosphate + 2 H(+). Its pathway is purine metabolism; AMP biosynthesis via de novo pathway; AMP from IMP: step 1/2. Plays an important role in the de novo pathway of purine nucleotide biosynthesis. Catalyzes the first committed step in the biosynthesis of AMP from IMP. The chain is Adenylosuccinate synthetase from Shouchella clausii (strain KSM-K16) (Alkalihalobacillus clausii).